A 456-amino-acid chain; its full sequence is Signal transduction histidine-protein kinase ArlS (456 aa).

The next 2 helical transmembrane spans lie at 13 to 33 and 157 to 177; these read LITTLITFTTILLFCLIIIFF and IVALAFGLIATIITAGVSYIF. In terms of domain architecture, HAMP spans 179–232; that stretch reads SQITKPIVTMSNKMNQIRRDGFQNKLELTTNYEETDNLIDTFNEMMYQIEESFN. Residues 240–456 form the Histidine kinase domain; the sequence is DASHELRTPL…TFKISFPVLN (217 aa). H243 carries the post-translational modification Phosphohistidine; by autocatalysis.

Autophosphorylated.

It is found in the cell membrane. It catalyses the reaction ATP + protein L-histidine = ADP + protein N-phospho-L-histidine.. Functionally, member of the two-component regulatory system ArlS/ArlR. ArlS probably functions as a sensor protein kinase which is autophosphorylated at a histidine residue and transfers its phosphate group to ArlR. This is Signal transduction histidine-protein kinase ArlS (arlS) from Staphylococcus epidermidis (strain ATCC 12228 / FDA PCI 1200).